A 265-amino-acid polypeptide reads, in one-letter code: Undecaprenyl-diphosphatase (265 aa).

A run of 7 helical transmembrane segments spans residues 42–62 (AATF…VLYW), 82–102 (GIML…AAHS), 108–128 (LFTP…MLLV), 143–163 (MSPA…WPGF), 181–201 (GLAA…ATGY), 221–241 (GFVV…ALVG), and 248–264 (FAWY…YFMA).

This sequence belongs to the UppP family.

Its subcellular location is the cell inner membrane. The enzyme catalyses di-trans,octa-cis-undecaprenyl diphosphate + H2O = di-trans,octa-cis-undecaprenyl phosphate + phosphate + H(+). In terms of biological role, catalyzes the dephosphorylation of undecaprenyl diphosphate (UPP). Confers resistance to bacitracin. This Nitratidesulfovibrio vulgaris (strain DP4) (Desulfovibrio vulgaris) protein is Undecaprenyl-diphosphatase.